The primary structure comprises 113 residues: Large ribosomal subunit protein uL22 (113 aa).

Belongs to the universal ribosomal protein uL22 family. In terms of assembly, part of the 50S ribosomal subunit.

In terms of biological role, this protein binds specifically to 23S rRNA; its binding is stimulated by other ribosomal proteins, e.g. L4, L17, and L20. It is important during the early stages of 50S assembly. It makes multiple contacts with different domains of the 23S rRNA in the assembled 50S subunit and ribosome. Functionally, the globular domain of the protein is located near the polypeptide exit tunnel on the outside of the subunit, while an extended beta-hairpin is found that lines the wall of the exit tunnel in the center of the 70S ribosome. The polypeptide is Large ribosomal subunit protein uL22 (Bacillus cereus (strain ATCC 10987 / NRS 248)).